Reading from the N-terminus, the 362-residue chain is Oxygen-dependent coproporphyrinogen-III oxidase (362 aa).

The disordered stretch occupies residues 12–31 (RQENDQSTPQLELPPTDSRD). Ser118 is a binding site for substrate. A divalent metal cation contacts are provided by His122 and His132. His132 serves as the catalytic Proton donor. A substrate-binding site is contributed by 134-136 (NYR). Positions 166 and 196 each coordinate a divalent metal cation. Positions 286–321 (YVEFNLVWDRGTIFGLQTNGRTESILMSLPPLVRWE) are important for dimerization.

Belongs to the aerobic coproporphyrinogen-III oxidase family. Homodimer. The cofactor is a divalent metal cation.

It localises to the cytoplasm. It carries out the reaction coproporphyrinogen III + O2 + 2 H(+) = protoporphyrinogen IX + 2 CO2 + 2 H2O. It participates in porphyrin-containing compound metabolism; protoporphyrin-IX biosynthesis; protoporphyrinogen-IX from coproporphyrinogen-III (O2 route): step 1/1. Involved in the heme and chlorophyll biosynthesis. Catalyzes the aerobic oxidative decarboxylation of propionate groups of rings A and B of coproporphyrinogen-III to yield the vinyl groups in protoporphyrinogen-IX. This Synechococcus sp. (strain CC9902) protein is Oxygen-dependent coproporphyrinogen-III oxidase.